A 144-amino-acid chain; its full sequence is Catabolic 3-dehydroquinase 1 (144 aa).

Tyr-24 (proton acceptor) is an active-site residue. Substrate-binding residues include Asn-75, His-81, and Asp-88. His-101 functions as the Proton donor in the catalytic mechanism. Substrate is bound by residues 102–103 and Arg-112; that span reads IS.

The protein belongs to the type-II 3-dehydroquinase family. Homododecamer. Adopts a ring-like structure, composed of an arrangement of two hexameric rings stacked on top of one another.

The catalysed reaction is 3-dehydroquinate = 3-dehydroshikimate + H2O. Its pathway is aromatic compound metabolism; 3,4-dihydroxybenzoate biosynthesis; 3,4-dihydroxybenzoate from 3-dehydroquinate: step 1/2. Functionally, is involved in the catabolism of quinate. Allows the utilization of quinate as carbon source via the beta-ketoadipate pathway. This chain is Catabolic 3-dehydroquinase 1, found in Fusarium vanettenii (strain ATCC MYA-4622 / CBS 123669 / FGSC 9596 / NRRL 45880 / 77-13-4) (Fusarium solani subsp. pisi).